The sequence spans 65 residues: UPF0434 protein BBta_0300 (65 aa).

It belongs to the UPF0434 family.

The chain is UPF0434 protein BBta_0300 from Bradyrhizobium sp. (strain BTAi1 / ATCC BAA-1182).